The following is a 310-amino-acid chain: Acetyl-coenzyme A carboxylase carboxyl transferase subunit beta (310 aa).

Residues 27-296 (LWRKCPNCEA…QDRDAEPDDT (270 aa)) enclose the CoA carboxyltransferase N-terminal domain. Residues cysteine 31, cysteine 34, cysteine 50, and cysteine 53 each coordinate Zn(2+). Residues 31-53 (CPNCEAVLYLPELERHQSVCPKC) form a C4-type zinc finger. Residues 282–310 (THQPHQDRDAEPDDTASQSTLDEFSQADH) form a disordered region.

It belongs to the AccD/PCCB family. As to quaternary structure, acetyl-CoA carboxylase is a heterohexamer composed of biotin carboxyl carrier protein (AccB), biotin carboxylase (AccC) and two subunits each of ACCase subunit alpha (AccA) and ACCase subunit beta (AccD). Requires Zn(2+) as cofactor.

The protein localises to the cytoplasm. It catalyses the reaction N(6)-carboxybiotinyl-L-lysyl-[protein] + acetyl-CoA = N(6)-biotinyl-L-lysyl-[protein] + malonyl-CoA. Its pathway is lipid metabolism; malonyl-CoA biosynthesis; malonyl-CoA from acetyl-CoA: step 1/1. Its function is as follows. Component of the acetyl coenzyme A carboxylase (ACC) complex. Biotin carboxylase (BC) catalyzes the carboxylation of biotin on its carrier protein (BCCP) and then the CO(2) group is transferred by the transcarboxylase to acetyl-CoA to form malonyl-CoA. This Chromohalobacter salexigens (strain ATCC BAA-138 / DSM 3043 / CIP 106854 / NCIMB 13768 / 1H11) protein is Acetyl-coenzyme A carboxylase carboxyl transferase subunit beta.